Consider the following 129-residue polypeptide: Small ribosomal subunit protein uS11 (129 aa).

The protein belongs to the universal ribosomal protein uS11 family. Part of the 30S ribosomal subunit. Interacts with proteins S7 and S18. Binds to IF-3.

In terms of biological role, located on the platform of the 30S subunit, it bridges several disparate RNA helices of the 16S rRNA. Forms part of the Shine-Dalgarno cleft in the 70S ribosome. The polypeptide is Small ribosomal subunit protein uS11 (Novosphingobium aromaticivorans (strain ATCC 700278 / DSM 12444 / CCUG 56034 / CIP 105152 / NBRC 16084 / F199)).